A 404-amino-acid polypeptide reads, in one-letter code: Propionate kinase (404 aa).

This sequence belongs to the acetokinase family. PduW subfamily.

It localises to the cytoplasm. It carries out the reaction propanoate + ATP = propanoyl phosphate + ADP. It functions in the pathway polyol metabolism; 1,2-propanediol degradation. Works with phosphate acetyltransferase (pta) to capture exogenous propionate and regenerate propionyl-CoA during degradation of 1,2-propanediol (1,2-PD). Functionally, expression of a cosmid containing the full 21-gene pdu operon in E.coli allows E.coli to grow on 1,2-propanediol (1,2-PD) with the appearance of bacterial microcompartments (BMC) in its cytoplasm. The chain is Propionate kinase from Citrobacter freundii.